A 572-amino-acid chain; its full sequence is M-phase inducer phosphatase 3 (572 aa).

Disordered regions lie at residues 95–117 (NLGD…GKLE) and 304–354 (SPSM…QRRG). The 108-residue stretch at 420 to 527 (LVEKFFIIDC…FFPEYKELCE (108 aa)) folds into the Rhodanese domain. Residue C476 is part of the active site.

Belongs to the MPI phosphatase family.

The catalysed reaction is O-phospho-L-tyrosyl-[protein] + H2O = L-tyrosyl-[protein] + phosphate. Functionally, this protein functions as a dosage-dependent inducer in mitotic control. It is a tyrosine protein phosphatase required for progression of the cell cycle. It may directly dephosphorylate p34(cdc2) and activate the p34(cdc2) kinase activity. This chain is M-phase inducer phosphatase 3 (cdc25-3), found in Xenopus laevis (African clawed frog).